We begin with the raw amino-acid sequence, 187 residues long: Ribosome maturation factor RimM (187 aa).

The 74-residue stretch at 96–169 folds into the PRC barrel domain; the sequence is EDEFFYADLE…KLVIDPTAAG (74 aa).

It belongs to the RimM family. As to quaternary structure, binds ribosomal protein uS19.

The protein resides in the cytoplasm. An accessory protein needed during the final step in the assembly of 30S ribosomal subunit, possibly for assembly of the head region. Essential for efficient processing of 16S rRNA. May be needed both before and after RbfA during the maturation of 16S rRNA. It has affinity for free ribosomal 30S subunits but not for 70S ribosomes. The protein is Ribosome maturation factor RimM of Rhizobium meliloti (strain 1021) (Ensifer meliloti).